The following is a 234-amino-acid chain: DNA repair protein RecO (234 aa).

The protein belongs to the RecO family.

In terms of biological role, involved in DNA repair and RecF pathway recombination. The protein is DNA repair protein RecO of Halorhodospira halophila (strain DSM 244 / SL1) (Ectothiorhodospira halophila (strain DSM 244 / SL1)).